Reading from the N-terminus, the 331-residue chain is 3-dehydroquinate synthase homolog (331 aa).

Belongs to the archaeal-type DHQ synthase family.

This chain is 3-dehydroquinate synthase homolog, found in Persephonella marina (strain DSM 14350 / EX-H1).